The sequence spans 505 residues: Sodium-coupled neutral amino acid transporter 3 (505 aa).

The disordered stretch occupies residues 27-48; the sequence is VPTTDTQRTEDTQHCGEGKGFL. Positions 33-43 are enriched in basic and acidic residues; the sequence is QRTEDTQHCGE. N-linked (GlcNAc...) asparagine glycosylation is present at Asn73. 5 helical membrane passes run 82 to 102, 105 to 125, 143 to 163, 186 to 206, and 212 to 232; these read GILG…LFLL, VALL…IVGI, AAAL…LYII, MDGN…LALM, and LGYS…AVIY. Cys239 and Cys276 are disulfide-bonded. Asn247 and Asn251 each carry an N-linked (GlcNAc...) asparagine glycan. The chain crosses the membrane as a helical span at residues 288–308; it reads AYTIPIMAFAFVCHPEVLPIY. Residue Asn324 is glycosylated (N-linked (GlcNAc...) asparagine). 5 helical membrane-spanning segments follow: residues 325–345, 367–387, 409–429, 432–452, and 472–492; these read LSIA…YLTF, ILCV…IVLF, VLIA…APNI, IFGI…PAIF, and ALCF…FIII.

This sequence belongs to the amino acid/polyamine transporter 2 family. Expressed predominantly in liver, moderately expressed in kidney and brain, and barely detectable in heart and muscle. Within liver, expressed in hepatocytes. Not detected in testis. Expressed in cells of the ganglion cell layer, in soma of some cells of the inner nuclear layer (at protein level). Expressed in the inner segments of photoreceptor cells.

The protein localises to the cell membrane. It is found in the basolateral cell membrane. The enzyme catalyses L-histidine(out) + Na(+)(out) + H(+)(in) = L-histidine(in) + Na(+)(in) + H(+)(out). The catalysed reaction is L-glutamine(out) + Na(+)(out) + H(+)(in) = L-glutamine(in) + Na(+)(in) + H(+)(out). It carries out the reaction L-asparagine(out) + Na(+)(out) + H(+)(in) = L-asparagine(in) + Na(+)(in) + H(+)(out). Symporter that cotransports specific neutral amino acids and sodium ions, coupled to an H(+) antiporter activity. Mainly participates in the glutamate-GABA-glutamine cycle in brain where it transports L-glutamine from astrocytes in the intercellular space for the replenishment of both neurotransmitters glutamate and gamma-aminobutyric acid (GABA) in neurons and also functions as the major influx transporter in ganglion cells mediating the uptake of glutamine. The transport activity is specific for L-glutamine, L-histidine and L-asparagine. The transport is electroneutral coupled to the cotransport of 1 Na(+) and the antiport of 1 H(+). The transport is pH dependent, saturable, Li(+) tolerant and functions in both direction depending on the concentration gradients of its substrates and cotransported ions. Also mediates an amino acid-gated H(+) conductance that is not stoichiometrically coupled to the amino acid transport but which influences the ionic gradients that drive the amino acid transport. In addition, may play a role in nitrogen metabolism, amino acid homeostasis, glucose metabolism and renal ammoniagenesis. The protein is Sodium-coupled neutral amino acid transporter 3 of Mus musculus (Mouse).